A 1083-amino-acid chain; its full sequence is Error-prone DNA polymerase (1083 aa).

Belongs to the DNA polymerase type-C family. DnaE2 subfamily.

The protein resides in the cytoplasm. The enzyme catalyses DNA(n) + a 2'-deoxyribonucleoside 5'-triphosphate = DNA(n+1) + diphosphate. Its function is as follows. DNA polymerase involved in damage-induced mutagenesis and translesion synthesis (TLS). It is not the major replicative DNA polymerase. This Xanthomonas oryzae pv. oryzae (strain PXO99A) protein is Error-prone DNA polymerase.